Here is a 749-residue protein sequence, read N- to C-terminus: Adenosylcobalamin-dependent ribonucleoside-triphosphate reductase (749 aa).

The cysteines at positions 124 and 427 are disulfide-linked. The interval 152–163 is effector region-1; that stretch reads SMPFSFMFDQLM. Positions 173 to 321 are effector region-2; the sequence is TPNNVHQMPV…MGNMIGKTVV (149 aa). Catalysis depends on residues cysteine 416 and glutamate 418. Residues 573-634 form an adenosylcobalamin-binding-1 region; it reads FHYARYLIQR…EPAFASAGEV (62 aa). Residues 693–734 form an adenosylcobalamin-binding-2 region; it reads FKQAPKEPIDAATYDAKCQEITADVAEKFAAMTGNHDQKDIE.

It belongs to the class II ribonucleoside-triphosphate reductase family. Monomer. It depends on adenosylcob(III)alamin as a cofactor.

The catalysed reaction is a 2'-deoxyribonucleoside 5'-triphosphate + [thioredoxin]-disulfide + H2O = a ribonucleoside 5'-triphosphate + [thioredoxin]-dithiol. Allosterically regulated by ATP and dNTP. The sequence is that of Adenosylcobalamin-dependent ribonucleoside-triphosphate reductase (rtpR) from Levilactobacillus brevis (strain ATCC 367 / BCRC 12310 / CIP 105137 / JCM 1170 / LMG 11437 / NCIMB 947 / NCTC 947) (Lactobacillus brevis).